Consider the following 195-residue polypeptide: Adenylate kinase (195 aa).

Position 8–16 (8–16 (GIPGVGKTT)) interacts with ATP.

The protein belongs to the archaeal adenylate kinase family.

Its subcellular location is the cytoplasm. It catalyses the reaction AMP + ATP = 2 ADP. This is Adenylate kinase from Saccharolobus islandicus (strain M.14.25 / Kamchatka #1) (Sulfolobus islandicus).